The sequence spans 242 residues: Biosynthetic peptidoglycan transglycosylase (242 aa).

The chain crosses the membrane as a helical span at residues 19 to 39 (LMVVLAIFWGGGIALFSVAPV).

This sequence belongs to the glycosyltransferase 51 family.

It localises to the cell inner membrane. It carries out the reaction [GlcNAc-(1-&gt;4)-Mur2Ac(oyl-L-Ala-gamma-D-Glu-L-Lys-D-Ala-D-Ala)](n)-di-trans,octa-cis-undecaprenyl diphosphate + beta-D-GlcNAc-(1-&gt;4)-Mur2Ac(oyl-L-Ala-gamma-D-Glu-L-Lys-D-Ala-D-Ala)-di-trans,octa-cis-undecaprenyl diphosphate = [GlcNAc-(1-&gt;4)-Mur2Ac(oyl-L-Ala-gamma-D-Glu-L-Lys-D-Ala-D-Ala)](n+1)-di-trans,octa-cis-undecaprenyl diphosphate + di-trans,octa-cis-undecaprenyl diphosphate + H(+). The protein operates within cell wall biogenesis; peptidoglycan biosynthesis. In terms of biological role, peptidoglycan polymerase that catalyzes glycan chain elongation from lipid-linked precursors. The polypeptide is Biosynthetic peptidoglycan transglycosylase (Escherichia coli O45:K1 (strain S88 / ExPEC)).